The primary structure comprises 151 residues: Superoxide dismutase [Cu-Zn] 4 (151 aa).

His45, His47, and His62 together coordinate Cu cation. Cysteines 56 and 145 form a disulfide. Zn(2+) is bound by residues His62, His70, His79, and Asp82. A Cu cation-binding site is contributed by His120.

Belongs to the Cu-Zn superoxide dismutase family. In terms of assembly, homodimer. The cofactor is Cu cation. Zn(2+) is required as a cofactor.

It localises to the cytoplasm. The catalysed reaction is 2 superoxide + 2 H(+) = H2O2 + O2. Functionally, destroys radicals which are normally produced within the cells and which are toxic to biological systems. Protects spores from cellular damage caused by UV LIGHT. The chain is Superoxide dismutase [Cu-Zn] 4 (sodD) from Dictyostelium discoideum (Social amoeba).